The chain runs to 190 residues: Potassium-transporting ATPase KdpC subunit (190 aa).

Residues 15–35 traverse the membrane as a helical segment; sequence LWILTALIYPAIVLVIGQLVF.

This sequence belongs to the KdpC family. As to quaternary structure, the system is composed of three essential subunits: KdpA, KdpB and KdpC.

The protein resides in the cell inner membrane. In terms of biological role, part of the high-affinity ATP-driven potassium transport (or Kdp) system, which catalyzes the hydrolysis of ATP coupled with the electrogenic transport of potassium into the cytoplasm. This subunit acts as a catalytic chaperone that increases the ATP-binding affinity of the ATP-hydrolyzing subunit KdpB by the formation of a transient KdpB/KdpC/ATP ternary complex. The chain is Potassium-transporting ATPase KdpC subunit from Synechocystis sp. (strain ATCC 27184 / PCC 6803 / Kazusa).